We begin with the raw amino-acid sequence, 419 residues long: Serine--tRNA ligase (419 aa).

226 to 228 (TSE) contributes to the L-serine binding site. Residues 257-259 (RRE) and valine 273 contribute to the ATP site. Residue glutamate 280 participates in L-serine binding. An ATP-binding site is contributed by 344–347 (ELTS). Threonine 379 contacts L-serine.

This sequence belongs to the class-II aminoacyl-tRNA synthetase family. Type-1 seryl-tRNA synthetase subfamily. Homodimer. The tRNA molecule binds across the dimer.

It localises to the cytoplasm. It carries out the reaction tRNA(Ser) + L-serine + ATP = L-seryl-tRNA(Ser) + AMP + diphosphate + H(+). The enzyme catalyses tRNA(Sec) + L-serine + ATP = L-seryl-tRNA(Sec) + AMP + diphosphate + H(+). Its pathway is aminoacyl-tRNA biosynthesis; selenocysteinyl-tRNA(Sec) biosynthesis; L-seryl-tRNA(Sec) from L-serine and tRNA(Sec): step 1/1. Functionally, catalyzes the attachment of serine to tRNA(Ser). Is also able to aminoacylate tRNA(Sec) with serine, to form the misacylated tRNA L-seryl-tRNA(Sec), which will be further converted into selenocysteinyl-tRNA(Sec). This chain is Serine--tRNA ligase, found in Mycobacterium tuberculosis (strain CDC 1551 / Oshkosh).